Here is a 223-residue protein sequence, read N- to C-terminus: ATP-dependent dethiobiotin synthetase BioD (223 aa).

Residue threonine 16 coordinates Mg(2+). Lysine 37 is an active-site residue. Residue serine 41 coordinates substrate. Mg(2+) is bound by residues aspartate 50 and glutamate 111. ATP-binding positions include aspartate 50, 111-114 (EGAG), 171-172 (NQ), 201-203 (AHV), and glutamate 208.

Belongs to the dethiobiotin synthetase family. Homodimer. Requires Mg(2+) as cofactor.

The protein localises to the cytoplasm. It catalyses the reaction (7R,8S)-7,8-diammoniononanoate + CO2 + ATP = (4R,5S)-dethiobiotin + ADP + phosphate + 3 H(+). It functions in the pathway cofactor biosynthesis; biotin biosynthesis; biotin from 7,8-diaminononanoate: step 1/2. In terms of biological role, catalyzes a mechanistically unusual reaction, the ATP-dependent insertion of CO2 between the N7 and N8 nitrogen atoms of 7,8-diaminopelargonic acid (DAPA, also called 7,8-diammoniononanoate) to form a ureido ring. This is ATP-dependent dethiobiotin synthetase BioD from Anaeromyxobacter sp. (strain Fw109-5).